The primary structure comprises 170 residues: UPF0251 protein MA_1017 (170 aa).

It belongs to the UPF0251 family.

This chain is UPF0251 protein MA_1017, found in Methanosarcina acetivorans (strain ATCC 35395 / DSM 2834 / JCM 12185 / C2A).